The following is a 505-amino-acid chain: Putative thymidine phosphorylase (505 aa).

It belongs to the thymidine/pyrimidine-nucleoside phosphorylase family. Type 2 subfamily.

The catalysed reaction is thymidine + phosphate = 2-deoxy-alpha-D-ribose 1-phosphate + thymine. The sequence is that of Putative thymidine phosphorylase from Hahella chejuensis (strain KCTC 2396).